Reading from the N-terminus, the 205-residue chain is UPF0637 protein OB1420 (205 aa).

Belongs to the UPF0637 family.

The chain is UPF0637 protein OB1420 from Oceanobacillus iheyensis (strain DSM 14371 / CIP 107618 / JCM 11309 / KCTC 3954 / HTE831).